Here is a 557-residue protein sequence, read N- to C-terminus: Glucose-6-phosphate isomerase (557 aa).

The active-site Proton donor is E359. Active-site residues include H390 and K518.

This sequence belongs to the GPI family.

It is found in the cytoplasm. The enzyme catalyses alpha-D-glucose 6-phosphate = beta-D-fructose 6-phosphate. It functions in the pathway carbohydrate biosynthesis; gluconeogenesis. Its pathway is carbohydrate degradation; glycolysis; D-glyceraldehyde 3-phosphate and glycerone phosphate from D-glucose: step 2/4. In terms of biological role, catalyzes the reversible isomerization of glucose-6-phosphate to fructose-6-phosphate. This is Glucose-6-phosphate isomerase from Hahella chejuensis (strain KCTC 2396).